The chain runs to 191 residues: Potassium-transporting ATPase KdpC subunit (191 aa).

The chain crosses the membrane as a helical span at residues 8–28 (LFLFLLLLLVTGLAYPLLTTV).

The protein belongs to the KdpC family. The system is composed of three essential subunits: KdpA, KdpB and KdpC.

It localises to the cell inner membrane. Its function is as follows. Part of the high-affinity ATP-driven potassium transport (or Kdp) system, which catalyzes the hydrolysis of ATP coupled with the electrogenic transport of potassium into the cytoplasm. This subunit acts as a catalytic chaperone that increases the ATP-binding affinity of the ATP-hydrolyzing subunit KdpB by the formation of a transient KdpB/KdpC/ATP ternary complex. The polypeptide is Potassium-transporting ATPase KdpC subunit (Pectobacterium atrosepticum (strain SCRI 1043 / ATCC BAA-672) (Erwinia carotovora subsp. atroseptica)).